The following is a 142-amino-acid chain: Large ribosomal subunit protein uL13 (142 aa).

This sequence belongs to the universal ribosomal protein uL13 family. Part of the 50S ribosomal subunit.

In terms of biological role, this protein is one of the early assembly proteins of the 50S ribosomal subunit, although it is not seen to bind rRNA by itself. It is important during the early stages of 50S assembly. In Haemophilus influenzae (strain 86-028NP), this protein is Large ribosomal subunit protein uL13.